Here is an 89-residue protein sequence, read N- to C-terminus: Large ribosomal subunit protein eL31 (89 aa).

The protein belongs to the eukaryotic ribosomal protein eL31 family.

The polypeptide is Large ribosomal subunit protein eL31 (rpl31e) (Thermoplasma acidophilum (strain ATCC 25905 / DSM 1728 / JCM 9062 / NBRC 15155 / AMRC-C165)).